A 205-amino-acid chain; its full sequence is Ribosome maturation factor RimP (205 aa).

Residues Met1–Thr13 show a composition bias toward polar residues. The tract at residues Met1 to Glu27 is disordered. The span at Ala18–Glu27 shows a compositional bias: basic and acidic residues.

It belongs to the RimP family.

It is found in the cytoplasm. Functionally, required for maturation of 30S ribosomal subunits. The protein is Ribosome maturation factor RimP of Arthrobacter sp. (strain FB24).